A 115-amino-acid polypeptide reads, in one-letter code: SOSS complex subunit C homolog (115 aa).

This sequence belongs to the SOSS-C family.

This is SOSS complex subunit C homolog from Drosophila mojavensis (Fruit fly).